We begin with the raw amino-acid sequence, 77 residues long: Large ribosomal subunit protein bL28 (77 aa).

Belongs to the bacterial ribosomal protein bL28 family.

The sequence is that of Large ribosomal subunit protein bL28 from Polaromonas naphthalenivorans (strain CJ2).